Consider the following 433-residue polypeptide: B3 domain-containing protein Os04g0676600 (433 aa).

2 disordered regions span residues 1–29 (MADT…GGGQ) and 216–283 (FPPV…NSAN). Residues 13 to 24 (GDDRGREGHDDF) show a composition bias toward basic and acidic residues. Low complexity predominate over residues 216 to 229 (FPPVSSSSRSFSSA). Residues 237 to 265 (DAKKAKKSDIKDQPIVLRRSDTESEKNDE) show a composition bias toward basic and acidic residues. The segment covering 269 to 283 (TPASEPSSMSHNSAN) has biased composition (polar residues). The segment at residues 297 to 399 (LRKELTNSDV…KLVVRGEKAI (103 aa)) is a DNA-binding region (TF-B3).

The protein resides in the nucleus. Functionally, probable transcription regulator that binds specifically to the DNA sequence 5'-CATGC-3' of the IDE1 element found in the promoter of the barley iron deficiency-inducible gene IDS2. The sequence is that of B3 domain-containing protein Os04g0676600 from Oryza sativa subsp. japonica (Rice).